The chain runs to 522 residues: Probable G-protein coupled receptor egl-47 (522 aa).

The next 7 helical transmembrane spans lie at 140 to 160 (IIKL…NSFL), 184 to 204 (ASMI…LSAI), 238 to 258 (FVFF…KVVE), 276 to 296 (FILV…YHLY), 345 to 365 (PLLL…LYFL), 398 to 418 (ICWA…ICST), and 472 to 492 (LERT…LLLF).

The protein belongs to the G-protein coupled receptor family. Expressed in some neurons in the head, the HSN neurons and the PVQ interneurons of the tail.

The protein resides in the membrane. Orphan receptor. Regulates egg-laying probably by activating guanine nucleotide-binding protein goa-1, in the hermaphrodite-specific neurons (HSNs). In Caenorhabditis elegans, this protein is Probable G-protein coupled receptor egl-47.